Consider the following 642-residue polypeptide: Threonine--tRNA ligase (642 aa).

In terms of domain architecture, TGS spans 1 to 61 (MIKVTFPDGN…EHDGKLQLLT (61 aa)). The segment at 240 to 539 (DHRKIGKDLD…LIEEYKGSFP (300 aa)) is catalytic. Zn(2+)-binding residues include Cys334, His385, and His516.

This sequence belongs to the class-II aminoacyl-tRNA synthetase family. As to quaternary structure, homodimer. Zn(2+) is required as a cofactor.

Its subcellular location is the cytoplasm. It carries out the reaction tRNA(Thr) + L-threonine + ATP = L-threonyl-tRNA(Thr) + AMP + diphosphate + H(+). In terms of biological role, catalyzes the attachment of threonine to tRNA(Thr) in a two-step reaction: L-threonine is first activated by ATP to form Thr-AMP and then transferred to the acceptor end of tRNA(Thr). Also edits incorrectly charged L-seryl-tRNA(Thr). The polypeptide is Threonine--tRNA ligase (Acholeplasma laidlawii (strain PG-8A)).